A 453-amino-acid polypeptide reads, in one-letter code: Membrane-bound acylglycerophosphatidylinositol O-acyltransferase mboa-7 (453 aa).

The next 7 membrane-spanning stretches (helical) occupy residues 4-24, 36-56, 79-99, 154-174, 195-215, 220-240, and 244-264; these read ILGL…FSFG, ILAS…PKIV, LYVF…HYIL, AYFY…QMLI, VRLL…PLDI, AIWE…FVVF, and VYSA…GIYP. Asparagine 319 carries an N-linked (GlcNAc...) asparagine glycan. Residue histidine 350 is part of the active site. The next 2 helical transmembrane spans lie at 354–374 and 421–441; these read AGYF…DVIF and FWSS…IYSA.

This sequence belongs to the membrane-bound acyltransferase family. In terms of tissue distribution, expressed ubiquitously throughout development from early embryo to larval and adult stages. In adults, strongly expressed in pharyngeal muscle, body wall muscle, vulval cells, distal tip cells, intestinal cells and spermatheca.

It localises to the membrane. It catalyses the reaction 1-octadecanoyl-sn-glycero-3-phospho-(1D-myo-inositol) + (5Z,8Z,11Z,14Z,17Z)-eicosapentaenoyl-CoA = 1-octadecanoyl-2-(5Z,8Z,11Z,14Z,17Z-eicosapentaenoyl)-sn-glycero-3-phospho-(1D-myo-inositol) + CoA. It carries out the reaction a 1-acyl-sn-glycero-3-phospho-(1D-myo-inositol) + (5Z,8Z,11Z,14Z,17Z)-eicosapentaenoyl-CoA = a 1-acyl-2-(5Z,8Z,11Z,14Z,17Z-eicosapentaenoyl)-sn-glycero-3-phospho-(1D-myo-inositol) + CoA. The catalysed reaction is a 1-acyl-sn-glycero-3-phospho-(1D-myo-inositol) + (5Z,8Z,11Z,14Z)-eicosatetraenoyl-CoA = a 1-acyl-2-(5Z,8Z,11Z,14Z-eicosatetraenoyl)-sn-glycero-3-phospho-(1D-myo-inositol) + CoA. Its pathway is lipid metabolism; phospholipid metabolism. Functionally, acyltransferase which mediates the conversion of lysophosphatidylinositol (1-acyl-sn-glycero-3-phosphatidylinositol or LPI) into phosphatidylinositol (1,2-diacyl-sn-glycero-3-phosphoinositol or PI) (LPIAT activity). Prefers sn-2-LPI rather than sn-1-LPI as the acyl acceptor. Lysophospholipid acyltransferases (LPLATs) catalyze the reacylation step of the phospholipid remodeling pathway also known as the Lands cycle. Involved in the selective incorporation of arachidonoyl-CoA ((5Z,8Z,11Z,14Z)-eicosatetraenoyl-CoA) and (5Z,8Z,11Z,14Z,17Z)-eicosapentaenoyl-CoA (EPA-CoA) into PI. Besides its role in biomembranes, PI is a precursor of PI 3-phosphate (PIP3) and its fatty acid composition has an important role in PI3P signaling. This Caenorhabditis elegans protein is Membrane-bound acylglycerophosphatidylinositol O-acyltransferase mboa-7.